Here is a 275-residue protein sequence, read N- to C-terminus: Phosphite import ATP-binding protein PxtA (275 aa).

An ABC transporter domain is found at 11–252 (LRVDRLSVVY…QLERIYAGRS (242 aa)). 44 to 51 (GLSGAGKS) provides a ligand contact to ATP. Residues 251–275 (RSTTQPANAPAEPPVMLEPSLEMSR) are disordered.

It belongs to the ABC transporter superfamily. Phosphonates importer (TC 3.A.1.9.1) family. In terms of assembly, the complex is composed of two ATP-binding proteins (PtxA), two transmembrane proteins (PtxC) and a solute-binding protein (PtxB).

It localises to the cell inner membrane. It catalyses the reaction phosphite(out) + ATP + H2O = phosphite(in) + ADP + phosphate + H(+). Its function is as follows. Part of the ABC transporter complex PtxABC involved in phosphite import. Responsible for energy coupling to the transport system. This chain is Phosphite import ATP-binding protein PxtA (ptxA), found in Stutzerimonas stutzeri (Pseudomonas stutzeri).